A 225-amino-acid polypeptide reads, in one-letter code: Leucyl/phenylalanyl-tRNA--protein transferase (225 aa).

This sequence belongs to the L/F-transferase family.

The protein resides in the cytoplasm. It carries out the reaction N-terminal L-lysyl-[protein] + L-leucyl-tRNA(Leu) = N-terminal L-leucyl-L-lysyl-[protein] + tRNA(Leu) + H(+). The catalysed reaction is N-terminal L-arginyl-[protein] + L-leucyl-tRNA(Leu) = N-terminal L-leucyl-L-arginyl-[protein] + tRNA(Leu) + H(+). It catalyses the reaction L-phenylalanyl-tRNA(Phe) + an N-terminal L-alpha-aminoacyl-[protein] = an N-terminal L-phenylalanyl-L-alpha-aminoacyl-[protein] + tRNA(Phe). Functions in the N-end rule pathway of protein degradation where it conjugates Leu, Phe and, less efficiently, Met from aminoacyl-tRNAs to the N-termini of proteins containing an N-terminal arginine or lysine. This Nitrobacter winogradskyi (strain ATCC 25391 / DSM 10237 / CIP 104748 / NCIMB 11846 / Nb-255) protein is Leucyl/phenylalanyl-tRNA--protein transferase.